The sequence spans 529 residues: Basal body-orientation factor 1 (529 aa).

Over residues 1–13 (MPSKGKDKKKGKS) the composition is skewed to basic residues. A disordered region spans residues 1–22 (MPSKGKDKKKGKSRGKDTKKLI). Coiled coils occupy residues 55 to 198 (DTSR…LKQE) and 271 to 361 (IKEK…EVER). The interval 510–529 (GKVVLPTIPKGPQESDTGTF) is disordered.

The protein belongs to the BBOF1 family. As to quaternary structure, interacts with MNS1 and ODF2.

It is found in the cytoplasm. The protein resides in the cytoskeleton. It localises to the cilium basal body. The protein localises to the flagellum axoneme. Its function is as follows. Plays an essential role in sperm motility and male fertility by stabilizing the sperm flagellar axonemal structure. May be required for the stability of ODF2 and MANS1 proteins. Dispensable for the assembly and function of motile cilia. In Macaca fascicularis (Crab-eating macaque), this protein is Basal body-orientation factor 1.